The sequence spans 436 residues: Probable ABC transporter binding protein NosD (436 aa).

Positions 1 to 27 are cleaved as a signal peptide; the sequence is MFKAQATFSRYSAAVSLLLLFSGAAQA. PbH1 repeat units lie at residues 85 to 113, 115 to 136, 137 to 166, 167 to 188, 189 to 210, 233 to 255, 293 to 314, and 316 to 354; these read APDV…FILP, AERA…FVDG, TRDV…HLFA, VSGA…YIDT, SNGN…HYMF, SRKL…LMNY, SLFN…HLTA, and SEDN…YWSD.

This sequence belongs to the NosD family. In terms of assembly, the complex may be composed of an ATP-binding protein (NosF), a transmembrane protein (NosY) and a solute-binding protein (NosD).

Its subcellular location is the periplasm. Required for the assembly of the copper chromophores of nitrous oxide reductase. Could be part of the ABC transporter complex NosDFY. The polypeptide is Probable ABC transporter binding protein NosD (Stutzerimonas stutzeri (Pseudomonas stutzeri)).